A 202-amino-acid chain; its full sequence is Na(+)-translocating NADH-quinone reductase subunit E (202 aa).

6 helical membrane passes run 5 to 25 (VSLF…FLGM), 35 to 55 (VSTA…TVPL), 81 to 101 (FLGL…LEMF), 114 to 134 (GVFL…LFMV), 144 to 164 (LTYG…LAGI), and 180 to 200 (LGIT…FGGM).

This sequence belongs to the NqrDE/RnfAE family. Composed of six subunits; NqrA, NqrB, NqrC, NqrD, NqrE and NqrF.

It localises to the cell inner membrane. The enzyme catalyses a ubiquinone + n Na(+)(in) + NADH + H(+) = a ubiquinol + n Na(+)(out) + NAD(+). Functionally, NQR complex catalyzes the reduction of ubiquinone-1 to ubiquinol by two successive reactions, coupled with the transport of Na(+) ions from the cytoplasm to the periplasm. NqrA to NqrE are probably involved in the second step, the conversion of ubisemiquinone to ubiquinol. This chain is Na(+)-translocating NADH-quinone reductase subunit E, found in Psychrobacter sp. (strain PRwf-1).